A 470-amino-acid chain; its full sequence is Angiopoietin-related protein 6 (470 aa).

The first 20 residues, 1 to 20, serve as a signal peptide directing secretion; it reads MGKPWLRALQLLLLLGASWA. N-linked (GlcNAc...) asparagine glycosylation is present at Asn58. Positions 59 to 116 form a coiled coil; that stretch reads ASELAALRMRVGRHEELLRELQRLAAADGAVAGEVRALRKESRGLSARLGQLRAQLQH. N-linked (GlcNAc...) (complex) asparagine glycosylation occurs at Asn145. The segment at 214–249 is disordered; sequence SDTSRMLDPAPEPQRDQTQRQQEPMASPMPAGHPAV. The Fibrinogen C-terminal domain occupies 251–469; the sequence is TKPVGPWQDC…KAAMLIRPLK (219 aa). 2 disulfides stabilise this stretch: Cys260–Cys287 and Cys410–Cys423.

Its subcellular location is the secreted. In terms of biological role, may play a role in the wound healing process. May promote epidermal proliferation, remodeling and regeneration. May promote the chemotactic activity of endothelial cells and induce neovascularization. May counteract high-fat diet-induced obesity and related insulin resistance through increased energy expenditure. In Homo sapiens (Human), this protein is Angiopoietin-related protein 6 (ANGPTL6).